The primary structure comprises 503 residues: Glutamyl-tRNA(Gln) amidotransferase subunit A (503 aa).

Active-site charge relay system residues include K79 and S154. The Acyl-ester intermediate role is filled by S178.

Belongs to the amidase family. GatA subfamily. In terms of assembly, heterotrimer of A, B and C subunits.

The enzyme catalyses L-glutamyl-tRNA(Gln) + L-glutamine + ATP + H2O = L-glutaminyl-tRNA(Gln) + L-glutamate + ADP + phosphate + H(+). Allows the formation of correctly charged Gln-tRNA(Gln) through the transamidation of misacylated Glu-tRNA(Gln) in organisms which lack glutaminyl-tRNA synthetase. The reaction takes place in the presence of glutamine and ATP through an activated gamma-phospho-Glu-tRNA(Gln). The sequence is that of Glutamyl-tRNA(Gln) amidotransferase subunit A from Agathobacter rectalis (strain ATCC 33656 / DSM 3377 / JCM 17463 / KCTC 5835 / VPI 0990) (Eubacterium rectale).